The sequence spans 366 residues: Chorismate synthase (366 aa).

Arginine 48 and arginine 54 together coordinate NADP(+). FMN-binding positions include 129-131, 241-242, glycine 290, 305-309, and arginine 331; these read RSS, NA, and KPTSS.

It belongs to the chorismate synthase family. In terms of assembly, homotetramer. FMNH2 serves as cofactor.

It catalyses the reaction 5-O-(1-carboxyvinyl)-3-phosphoshikimate = chorismate + phosphate. It participates in metabolic intermediate biosynthesis; chorismate biosynthesis; chorismate from D-erythrose 4-phosphate and phosphoenolpyruvate: step 7/7. Catalyzes the anti-1,4-elimination of the C-3 phosphate and the C-6 proR hydrogen from 5-enolpyruvylshikimate-3-phosphate (EPSP) to yield chorismate, which is the branch point compound that serves as the starting substrate for the three terminal pathways of aromatic amino acid biosynthesis. This reaction introduces a second double bond into the aromatic ring system. This chain is Chorismate synthase, found in Nitrobacter hamburgensis (strain DSM 10229 / NCIMB 13809 / X14).